Here is a 465-residue protein sequence, read N- to C-terminus: WASH complex subunit 1 (465 aa).

The required for WASH complex assembly stretch occupies residues 1–54; the sequence is MTPVRMQHSLAGQTYAVPFIQPDLRREEAVQQMADALQYLQKVSGDIFSRISQQ. Positions 1–167 are WHD1; sequence MTPVRMQHSL…EGLGGLPSNI (167 aa). Residue lysine 220 forms a Glycyl lysine isopeptide (Lys-Gly) (interchain with G-Cter in ubiquitin) linkage. Disordered stretches follow at residues 297–359, 376–407, and 423–465; these read QDGV…VDPS, GKAK…QGGH, and ISGK…DWES. A compositionally biased stretch (pro residues) spans 302 to 314; sequence TPPPPPPPPPPAP. Residues 349-465 form a VCA region; it reads QGAPREVVDP…AEEDEDDWES (117 aa). The WH2 domain maps to 361–383; that stretch reads GWATLLESIRQAGGIGKAKLRSM. Over residues 382 to 398 the composition is skewed to basic and acidic residues; it reads SMKERKLEKQQQKEQEQ. Positions 424 to 436 are enriched in gly residues; the sequence is SGKGPGAGEGPGG. The span at 456-465 shows a compositional bias: acidic residues; that stretch reads AEEDEDDWES.

It belongs to the WASH1 family. Component of the WASH core complex also described as WASH regulatory complex (SHRC) composed of WASH (WASHC1, WASH2P or WASH3P), WASHC2 (WASHC2A or WASHC2C), WASHC3, WASHC4 and WASHC5. The WASH core complex associates via WASHC2 with the F-actin-capping protein dimer (formed by CAPZA1, CAPZA2 or CAPZA3 and CAPZB) in a transient or substoichiometric manner which was initially described as WASH complex. Interacts (via WHD1 region) with WASHC2C; the interaction is direct. Interacts with VPS35; mediates the association with the retromer CSC complex. Interacts with FKBP15. Interacts with alpha-tubulin. Interacts with BECN1; this interaction can be competed out by AMBRA1 binding. Interacts with BLOC1S2; may associate with the BLOC-1 complex. Interacts with tubulin gamma chain (TUBG1 or TUBG2). Interacts with EXOC1, EXOC4, EXOC8; in MMP14-positive endosomes in breast tumor cells; indicative for an association with the exocyst complex. Interacts with TBC1D23. Ubiquitinated at Lys-220 via 'Lys-63'-linked ubiquitin chains by the TRIM27:MAGEL2 E3 ubiquitin ligase complex, leading to promote endosomal F-actin assembly.

The protein localises to the early endosome membrane. It localises to the recycling endosome membrane. The protein resides in the late endosome. It is found in the cytoplasmic vesicle. Its subcellular location is the autophagosome. The protein localises to the cytoplasm. It localises to the cytoskeleton. The protein resides in the microtubule organizing center. It is found in the centrosome. Its subcellular location is the centriole. Its function is as follows. Acts as a component of the WASH core complex that functions as a nucleation-promoting factor (NPF) at the surface of endosomes, where it recruits and activates the Arp2/3 complex to induce actin polymerization, playing a key role in the fission of tubules that serve as transport intermediates during endosome sorting. Involved in endocytic trafficking of EGF. Involved in transferrin receptor recycling. Regulates the trafficking of endosomal alpha5beta1 integrin to the plasma membrane and involved in invasive cell migration. In T-cells involved in endosome-to-membrane recycling of receptors including T-cell receptor (TCR), CD28 and ITGAL; proposed to be implicated in T cell proliferation and effector function. In dendritic cells involved in endosome-to-membrane recycling of major histocompatibility complex (MHC) class II probably involving retromer and subsequently allowing antigen sampling, loading and presentation during T-cell activation. Involved in Arp2/3 complex-dependent actin assembly driving Salmonella typhimurium invasion independent of ruffling. Involved in the exocytosis of MMP14 leading to matrix remodeling during invasive migration and implicating late endosome-to-plasma membrane tubular connections and cooperation with the exocyst complex. Involved in negative regulation of autophagy independently from its role in endosomal sorting by inhibiting BECN1 ubiquitination to inactivate PIK3C3/Vps34 activity. The sequence is that of WASH complex subunit 1 from Homo sapiens (Human).